Here is a 101-residue protein sequence, read N- to C-terminus: UPF0235 protein Cphamn1_2066 (101 aa).

It belongs to the UPF0235 family.

The polypeptide is UPF0235 protein Cphamn1_2066 (Chlorobium phaeobacteroides (strain BS1)).